The sequence spans 428 residues: G2/mitotic-specific cyclin-B (428 aa).

This sequence belongs to the cyclin family. Cyclin AB subfamily. As to quaternary structure, interacts with the CDC2 protein kinase to form a serine/threonine kinase holoenzyme complex also known as maturation promoting factor (MPF). The cyclin subunit imparts substrate specificity to the complex.

In terms of biological role, essential for the control of the cell cycle at the G2/M (mitosis) transition. The chain is G2/mitotic-specific cyclin-B from Spisula solidissima (Atlantic surf-clam).